The sequence spans 944 residues: Leucine--tRNA ligase 2 (944 aa).

The 'HIGH' region motif lies at 36–46 (PYPNSPFHLGH). A 'KMSKS' region motif is present at residues 621–625 (KMSKS). Residue lysine 624 participates in ATP binding.

This sequence belongs to the class-I aminoacyl-tRNA synthetase family.

It localises to the cytoplasm. It catalyses the reaction tRNA(Leu) + L-leucine + ATP = L-leucyl-tRNA(Leu) + AMP + diphosphate. In Sulfurisphaera tokodaii (strain DSM 16993 / JCM 10545 / NBRC 100140 / 7) (Sulfolobus tokodaii), this protein is Leucine--tRNA ligase 2.